The sequence spans 510 residues: Chromosomal replication initiator protein DnaA (510 aa).

A domain I, interacts with DnaA modulators region spans residues methionine 1–aspartate 107. The segment at aspartate 107 to threonine 169 is domain II. The tract at residues proline 119–glycine 168 is disordered. A domain III, AAA+ region region spans residues serine 170 to alanine 386. 4 residues coordinate ATP: glycine 214, glycine 216, lysine 217, and threonine 218. Positions serine 387–arginine 510 are domain IV, binds dsDNA.

The protein belongs to the DnaA family. As to quaternary structure, oligomerizes as a right-handed, spiral filament on DNA at oriC.

The protein localises to the cytoplasm. Plays an essential role in the initiation and regulation of chromosomal replication. ATP-DnaA binds to the origin of replication (oriC) to initiate formation of the DNA replication initiation complex once per cell cycle. Binds the DnaA box (a 9 base pair repeat at the origin) and separates the double-stranded (ds)DNA. Forms a right-handed helical filament on oriC DNA; dsDNA binds to the exterior of the filament while single-stranded (ss)DNA is stabiized in the filament's interior. The ATP-DnaA-oriC complex binds and stabilizes one strand of the AT-rich DNA unwinding element (DUE), permitting loading of DNA polymerase. After initiation quickly degrades to an ADP-DnaA complex that is not apt for DNA replication. Binds acidic phospholipids. This is Chromosomal replication initiator protein DnaA from Mycobacterium marinum (strain ATCC BAA-535 / M).